Consider the following 419-residue polypeptide: Hyaluronan synthase (419 aa).

5 helical membrane passes run 8-28 (LIVL…MYLF), 33-53 (VGIY…LSFL), 318-338 (IVAL…VAIG), 345-365 (AIQL…IVAL), and 376-396 (PASF…LQPL).

It belongs to the NodC/HAS family. Requires Mg(2+) as cofactor.

The protein localises to the cell membrane. It carries out the reaction [hyaluronan](n) + UDP-N-acetyl-alpha-D-glucosamine = N-acetyl-beta-D-glucosaminyl-(1-&gt;4)-[hyaluronan](n) + UDP + H(+). The enzyme catalyses N-acetyl-beta-D-glucosaminyl-(1-&gt;4)-[hyaluronan](n) + UDP-alpha-D-glucuronate = [hyaluronan](n+1) + UDP + H(+). Its pathway is glycan biosynthesis; hyaluronan biosynthesis. In terms of biological role, glycosaminoglycan synthesis. The hyaluronic acid capsule is involved in the pathogenicity of group A Streptococci; it may be the major virulence determinant. This Streptococcus pyogenes serotype M6 (strain ATCC BAA-946 / MGAS10394) protein is Hyaluronan synthase (hasA).